The following is a 567-amino-acid chain: Septation ring formation regulator EzrA (567 aa).

Residues 1 to 2 lie on the Extracellular side of the membrane; it reads ME. Residues 3–21 traverse the membrane as a helical segment; it reads FIIGLIVILLALFSVGYFL. The Cytoplasmic portion of the chain corresponds to 22–567; that stretch reads RKNIYKEIDR…AQQEKEYQHQ (546 aa). Coiled-coil stretches lie at residues 108 to 185, 243 to 375, and 402 to 529; these read IEDL…YEEE, KGYK…RDHV, and KGHL…ERRF.

The protein belongs to the EzrA family.

The protein localises to the cell membrane. Functionally, negative regulator of FtsZ ring formation; modulates the frequency and position of FtsZ ring formation. Inhibits FtsZ ring formation at polar sites. Interacts either with FtsZ or with one of its binding partners to promote depolymerization. The polypeptide is Septation ring formation regulator EzrA (Bacillus pumilus (strain SAFR-032)).